The following is a 374-amino-acid chain: 2-aminoethylphosphonate--pyruvate transaminase 1 (374 aa).

Position 195 is an N6-(pyridoxal phosphate)lysine (K195).

This sequence belongs to the class-V pyridoxal-phosphate-dependent aminotransferase family. PhnW subfamily. As to quaternary structure, homodimer. Pyridoxal 5'-phosphate serves as cofactor.

The enzyme catalyses (2-aminoethyl)phosphonate + pyruvate = phosphonoacetaldehyde + L-alanine. Involved in phosphonate degradation. This Polaromonas sp. (strain JS666 / ATCC BAA-500) protein is 2-aminoethylphosphonate--pyruvate transaminase 1.